Consider the following 103-residue polypeptide: UPF0145 protein PTH_2690 (103 aa).

Belongs to the UPF0145 family.

The chain is UPF0145 protein PTH_2690 from Pelotomaculum thermopropionicum (strain DSM 13744 / JCM 10971 / SI).